Consider the following 195-residue polypeptide: Imidazoleglycerol-phosphate dehydratase (195 aa).

Belongs to the imidazoleglycerol-phosphate dehydratase family.

The protein resides in the cytoplasm. The catalysed reaction is D-erythro-1-(imidazol-4-yl)glycerol 3-phosphate = 3-(imidazol-4-yl)-2-oxopropyl phosphate + H2O. It participates in amino-acid biosynthesis; L-histidine biosynthesis; L-histidine from 5-phospho-alpha-D-ribose 1-diphosphate: step 6/9. This is Imidazoleglycerol-phosphate dehydratase from Maridesulfovibrio salexigens (strain ATCC 14822 / DSM 2638 / NCIMB 8403 / VKM B-1763) (Desulfovibrio salexigens).